Reading from the N-terminus, the 272-residue chain is 4-hydroxy-tetrahydrodipicolinate reductase (272 aa).

Residues 10–15 (GAGGRM), glutamate 36, 100–102 (GTT), and 124–127 (SGNM) contribute to the NAD(+) site. Histidine 157 (proton donor/acceptor) is an active-site residue. Position 158 (histidine 158) interacts with (S)-2,3,4,5-tetrahydrodipicolinate. The active-site Proton donor is lysine 161. 167-168 (GT) contributes to the (S)-2,3,4,5-tetrahydrodipicolinate binding site.

It belongs to the DapB family.

It is found in the cytoplasm. The enzyme catalyses (S)-2,3,4,5-tetrahydrodipicolinate + NAD(+) + H2O = (2S,4S)-4-hydroxy-2,3,4,5-tetrahydrodipicolinate + NADH + H(+). The catalysed reaction is (S)-2,3,4,5-tetrahydrodipicolinate + NADP(+) + H2O = (2S,4S)-4-hydroxy-2,3,4,5-tetrahydrodipicolinate + NADPH + H(+). It functions in the pathway amino-acid biosynthesis; L-lysine biosynthesis via DAP pathway; (S)-tetrahydrodipicolinate from L-aspartate: step 4/4. Catalyzes the conversion of 4-hydroxy-tetrahydrodipicolinate (HTPA) to tetrahydrodipicolinate. The protein is 4-hydroxy-tetrahydrodipicolinate reductase of Bradyrhizobium sp. (strain ORS 278).